The primary structure comprises 638 residues: Chaperone protein DnaK 2 (638 aa).

Phosphothreonine; by autocatalysis is present on Thr-199. Residues 604 to 626 (AKEQAQSAPEGAQEADAAPADDV) form a disordered region. The span at 613–624 (EGAQEADAAPAD) shows a compositional bias: low complexity.

The protein belongs to the heat shock protein 70 family.

In terms of biological role, acts as a chaperone. The protein is Chaperone protein DnaK 2 of Colwellia psychrerythraea (strain 34H / ATCC BAA-681) (Vibrio psychroerythus).